The sequence spans 383 residues: uncharacterized protein (383 aa).

This sequence belongs to the peptidase M20 family.

This is an uncharacterized protein from Staphylococcus epidermidis (strain ATCC 12228 / FDA PCI 1200).